The sequence spans 203 residues: LexA repressor (203 aa).

A DNA-binding region (H-T-H motif) is located at residues 29–49; that stretch reads VREIGQEVGLSSSSTVHGYLK. Residues serine 126 and lysine 163 each act as for autocatalytic cleavage activity in the active site.

The protein belongs to the peptidase S24 family. As to quaternary structure, homodimer.

The enzyme catalyses Hydrolysis of Ala-|-Gly bond in repressor LexA.. Its function is as follows. Represses a number of genes involved in the response to DNA damage (SOS response), including recA and lexA. In the presence of single-stranded DNA, RecA interacts with LexA causing an autocatalytic cleavage which disrupts the DNA-binding part of LexA, leading to derepression of the SOS regulon and eventually DNA repair. This is LexA repressor from Pelotomaculum thermopropionicum (strain DSM 13744 / JCM 10971 / SI).